The sequence spans 510 residues: NAD(P)H-quinone oxidoreductase subunit 2, chloroplastic (510 aa).

The next 12 membrane-spanning stretches (helical) occupy residues 24–44 (LLLFNGSFIFPECILIFGLIL), 59–79 (WFYFISSTSLVMSITALLFRW), 99–119 (IFQFLILLCSTLCIPLSVEYI), 124–144 (MAITEFLLFVLTATLGGMFLC), 149–169 (LITIFVAPECFSLCSYLLSGY), 183–203 (YLLMGGASSSILVHGFSWLYG), 229–249 (ISIALISITVGIGFKLSPAPF), 295–315 (WHLLLEILAILSMILGNLIAI), 323–343 (MLAYSSIGQIGYVIIGIIVGD), 347–367 (GYASMITYMLFYISMNLGTFA), 395–415 (ALSSALCLLSLGGLPPLAGFF), and 418–438 (LHLFWCGWQAGLYFLVSIGLL).

It belongs to the complex I subunit 2 family. As to quaternary structure, NDH is composed of at least 16 different subunits, 5 of which are encoded in the nucleus.

The protein resides in the plastid. It localises to the chloroplast thylakoid membrane. It catalyses the reaction a plastoquinone + NADH + (n+1) H(+)(in) = a plastoquinol + NAD(+) + n H(+)(out). The enzyme catalyses a plastoquinone + NADPH + (n+1) H(+)(in) = a plastoquinol + NADP(+) + n H(+)(out). Its function is as follows. NDH shuttles electrons from NAD(P)H:plastoquinone, via FMN and iron-sulfur (Fe-S) centers, to quinones in the photosynthetic chain and possibly in a chloroplast respiratory chain. The immediate electron acceptor for the enzyme in this species is believed to be plastoquinone. Couples the redox reaction to proton translocation, and thus conserves the redox energy in a proton gradient. This is NAD(P)H-quinone oxidoreductase subunit 2, chloroplastic from Allium textile (Textile onion).